The sequence spans 396 residues: Elongation factor Tu (396 aa).

In terms of domain architecture, tr-type G spans 10-205; that stretch reads KPHVNIGTIG…ACDDNIPDPV (196 aa). A G1 region spans residues 19–26; sequence GHVDHGKT. 19–26 is a GTP binding site; that stretch reads GHVDHGKT. Mg(2+) is bound at residue threonine 26. A G2 region spans residues 62 to 66; that stretch reads GITIN. A G3 region spans residues 83–86; sequence DAPG. Residues 83–87 and 138–141 contribute to the GTP site; these read DAPGH and NKCD. Residues 138–141 form a G4 region; sequence NKCD. A G5 region spans residues 175–177; it reads SAL.

Belongs to the TRAFAC class translation factor GTPase superfamily. Classic translation factor GTPase family. EF-Tu/EF-1A subfamily. In terms of assembly, monomer.

Its subcellular location is the cytoplasm. It carries out the reaction GTP + H2O = GDP + phosphate + H(+). Functionally, GTP hydrolase that promotes the GTP-dependent binding of aminoacyl-tRNA to the A-site of ribosomes during protein biosynthesis. The polypeptide is Elongation factor Tu (Corynebacterium glutamicum (strain R)).